Here is a 356-residue protein sequence, read N- to C-terminus: Competence protein ComGA (356 aa).

144–151 provides a ligand contact to ATP; it reads GPTGSGKT.

Belongs to the GSP E family.

It is found in the cell membrane. Required for uptake of DNA by competent cells. This Bacillus subtilis (strain 168) protein is Competence protein ComGA (comGA).